Here is a 444-residue protein sequence, read N- to C-terminus: Ras-related protein RabX (444 aa).

Position 29–36 (29–36 (GGDVCSKN)) interacts with GTP. The short motif at 51-58 (LIQVFDDY) is the Effector region element. 73–77 (EFSSI) is a GTP binding site. The tract at residues 91 to 136 (ENNKNKNNNNNYNYNNNNYNNNNNNNNNNNNNNNNNNNNNNNNNNS) is disordered. Residues 95–135 (NKNNNNNYNYNNNNYNNNNNNNNNNNNNNNNNNNNNNNNNN) are compositionally biased toward low complexity. Residue 207-210 (NDSN) participates in GTP binding. Disordered stretches follow at residues 213 to 232 (TPNF…SNII) and 298 to 401 (LQGD…NNDL). Composition is skewed to low complexity over residues 217-232 (SDSS…SNII) and 303-399 (NNNN…TYNN). A lipid anchor (S-palmitoyl cysteine) is attached at Cys439. Residue Cys441 is modified to Cysteine methyl ester. The S-geranylgeranyl cysteine moiety is linked to residue Cys441. Residues 442–444 (NLM) constitute a propeptide, removed in mature form.

Belongs to the small GTPase superfamily. Rab family.

It localises to the cell membrane. This is Ras-related protein RabX (rabX) from Dictyostelium discoideum (Social amoeba).